A 653-amino-acid chain; its full sequence is uncharacterized protein (653 aa).

A run of 2 helical transmembrane segments spans residues 39–59 (AMTTLMVSLLMSSLPSGLKLI) and 207–227 (AVFVSIWLMVILGAAFNAFTI). The HAMP domain occupies 225 to 277 (FTITKPIRELLTGVKNIASGDFHQRISLPFGGELGALIFNFNEMAERLEKYEQ). One can recognise a PAS domain in the interval 286 to 356 (EKAKLETLVS…PALNDIVRKN (71 aa)). A Histidine kinase domain is found at 421 to 651 (NVSHELRTPL…CFFFDLIIAK (231 aa)). Residue His424 is modified to Phosphohistidine; by autocatalysis.

It is found in the plastid. The protein localises to the chloroplast membrane. It catalyses the reaction ATP + protein L-histidine = ADP + protein N-phospho-L-histidine.. This is an uncharacterized protein from Pyropia yezoensis (Susabi-nori).